Reading from the N-terminus, the 228-residue chain is FCS-Like Zinc finger 12 (228 aa).

An FLZ-type zinc finger spans residues Asp-162 to Glu-205.

The protein belongs to the FLZ family. As to quaternary structure, interacts with KIN10 and KIN11 via its FLZ-type zinc finger domain. Interacts with KINB1 and KINB2 via its N-terminal part. Forms homodimer and heterodimer with FLZ2 and FLZ10 in vitro.

May act as an adapter to facilitate the interaction of SnRK1 complex with effector proteins, conferring tissue- and stimulus-type specific differences in the SnRK1 regulation pathway. The protein is FCS-Like Zinc finger 12 of Arabidopsis thaliana (Mouse-ear cress).